The sequence spans 95 residues: Co-chaperonin GroES (95 aa).

Belongs to the GroES chaperonin family. As to quaternary structure, heptamer of 7 subunits arranged in a ring. Interacts with the chaperonin GroEL.

The protein resides in the cytoplasm. Its function is as follows. Together with the chaperonin GroEL, plays an essential role in assisting protein folding. The GroEL-GroES system forms a nano-cage that allows encapsulation of the non-native substrate proteins and provides a physical environment optimized to promote and accelerate protein folding. GroES binds to the apical surface of the GroEL ring, thereby capping the opening of the GroEL channel. In Chlorobium limicola (strain DSM 245 / NBRC 103803 / 6330), this protein is Co-chaperonin GroES.